A 1384-amino-acid chain; its full sequence is Contactin-associated protein 1 (1384 aa).

An N-terminal signal peptide occupies residues 1–19 (MMHLRLFCILLAAVSGAEG). At 20-1283 (WGYYGCDEEL…PYYHDEGWVA (1264 aa)) the chain is on the extracellular side. The region spanning 25–168 (CDEELVGPLY…IGLRLGLYGC (144 aa)) is the F5/8 type C domain. Cys25 and Cys168 are oxidised to a cystine. Residues Asn120, Asn128, and Asn276 are each glycosylated (N-linked (GlcNAc...) asparagine). Laminin G-like domains lie at 203 to 355 (FKTE…AFRC) and 389 to 538 (FRTW…FDTC). A disulfide bond links Cys323 and Cys355. 3 N-linked (GlcNAc...) asparagine glycosylation sites follow: Asn420, Asn499, and Asn518. 4 disulfide bridges follow: Cys506–Cys538, Cys544–Cys555, Cys549–Cys564, and Cys566–Cys576. The EGF-like 1 domain occupies 540–577 (ITDRCSPNMCEHDGRCYQSWDDFICYCELTGYKGETCH). Residues 576–795 (CHTPLYKESC…NTISFHTGAA (220 aa)) enclose the Fibrinogen C-terminal domain. 9 N-linked (GlcNAc...) asparagine glycosylation sites follow: Asn597, Asn653, Asn664, Asn763, Asn804, Asn843, Asn860, Asn948, and Asn956. A Laminin G-like 3 domain is found at 813 to 956 (FRTSAPSGVF…ANASEGTSPN (144 aa)). 4 cysteine pairs are disulfide-bonded: Cys930–Cys957, Cys961–Cys974, Cys968–Cys983, and Cys985–Cys995. Positions 957–996 (CTGHCAHPRLPCFHGGRCVERYSYYTCDCDLTAFDGPYCN) constitute an EGF-like 2 domain. Residues Asn1078 and Asn1147 are each glycosylated (N-linked (GlcNAc...) asparagine). Residues 1088–1250 (FSTSSAPAVL…VQGELSESNC (163 aa)) form the Laminin G-like 4 domain. Cys1209 and Cys1250 are oxidised to a cystine. Residues 1284 to 1304 (ILLGFLVAFLLLGLVGMLVLF) traverse the membrane as a helical segment. The Cytoplasmic portion of the chain corresponds to 1305–1384 (YLQNHRYKGS…PQILEESRSE (80 aa)). A compositionally biased stretch (basic and acidic residues) spans 1319–1328 (EPKAAHEYHP). A disordered region spans residues 1319 to 1384 (EPKAAHEYHP…PQILEESRSE (66 aa)). The SH3-binding signature appears at 1328 to 1369 (PGSKPPLPTSGPAQVPTPTAAPNQAPASAPAPAPTPAPAPGP). The segment covering 1339–1355 (PAQVPTPTAAPNQAPAS) has biased composition (low complexity). Residues 1356-1368 (APAPAPTPAPAPG) are compositionally biased toward pro residues. The residue at position 1383 (Ser1383) is a Phosphoserine.

Belongs to the neurexin family. As to quaternary structure, interacts with CNTN1/contactin in cis form. As to expression, predominantly expressed in brain. Weak expression detected in ovary, pancreas, colon, lung, heart, intestine and testis.

The protein localises to the membrane. It is found in the cell junction. The protein resides in the paranodal septate junction. Its function is as follows. Required, with CNTNAP2, for radial and longitudinal organization of myelinated axons. Plays a role in the formation of functional distinct domains critical for saltatory conduction of nerve impulses in myelinated nerve fibers. Demarcates the paranodal region of the axo-glial junction. In association with contactin involved in the signaling between axons and myelinating glial cells. This is Contactin-associated protein 1 (CNTNAP1) from Homo sapiens (Human).